Reading from the N-terminus, the 126-residue chain is Small ribosomal subunit protein uS12m (126 aa).

Disordered stretches follow at residues 1–27 (MPTM…LNKC) and 106–126 (GIPG…KDYI). Composition is skewed to basic residues over residues 12–23 (RESKRRTKRTRA) and 109–120 (GRRRGRSKYGTK).

The protein belongs to the universal ribosomal protein uS12 family.

The protein localises to the mitochondrion. Protein S12 is involved in the translation initiation step. The polypeptide is Small ribosomal subunit protein uS12m (RPS12) (Marchantia polymorpha (Common liverwort)).